The sequence spans 534 residues: Unguisins hydrolase ungD' (534 aa).

The protein belongs to the peptidase S12 family.

The protein operates within secondary metabolite biosynthesis. Functionally, hydrolase; part of the gene cluster that mediates the biosynthesis of the unguisins, gamma-aminobutyric acid (GABA)-containing fungal cyclic heptapeptides with the amino acid sequence cyclo-(D-Ala1-D-Val2-L-Leu3-beta-MePhe4-D-Ala5-D-Trp6-GABA7) for unguisin H and cyclo-(D-Ala1-D-Ala2-L-Leu3-beta-MePhe4-D-Ala5-D-Trp6-GABA7) for unguisin I. Within the pathway, the hydrolase ungD' catalyzes the hydrolysis between the D-tryptophan and GABA residues of unguisins H and I to produce the corresponding linear peptides. The alanine racemase ungC' catalyzes the interconversion of L-alanine and D-alanine, providing the D-alanine which is accepted by the first adenylation domain of the nonribosomal peptide synthetase (NRPS) ungA', whereas the methyltransferase ungE' provides the (2R,3R)-beta-methylphenylalanine residue incorporated by the module 4. UngA' is the main enzyme within the cluster which condenses the 7 residues using its respective 7 modules. The terminal condensation domain (Ct) is involved in cyclization with D-alanine and thereby releasing of unguisins H and I. The protein is Unguisins hydrolase ungD' of Aspergillus campestris (strain IBT 28561).